The sequence spans 151 residues: Putative pre-16S rRNA nuclease (151 aa).

It belongs to the YqgF nuclease family.

The protein resides in the cytoplasm. Its function is as follows. Could be a nuclease involved in processing of the 5'-end of pre-16S rRNA. The polypeptide is Putative pre-16S rRNA nuclease (Neisseria meningitidis serogroup C (strain 053442)).